The sequence spans 299 residues: GTPase Era (299 aa).

Positions 5 to 172 constitute an Era-type G domain; that stretch reads KSGFVSIIGR…IDVLKTYLPE (168 aa). The G1 stretch occupies residues 13 to 20; sequence GRPNVGKS. 13 to 20 serves as a coordination point for GTP; that stretch reads GRPNVGKS. Residues 39–43 are G2; the sequence is QTTRN. The tract at residues 60–63 is G3; sequence DTPG. GTP-binding positions include 60-64 and 122-125; these read DTPGI and NKID. The G4 stretch occupies residues 122-125; sequence NKID. A G5 region spans residues 151-153; sequence ISA. Residues 203–280 form the KH type-2 domain; it reads TSEEIPHAIG…YLELWVKVQR (78 aa).

The protein belongs to the TRAFAC class TrmE-Era-EngA-EngB-Septin-like GTPase superfamily. Era GTPase family. Monomer.

The protein resides in the cytoplasm. The protein localises to the cell membrane. In terms of biological role, an essential GTPase that binds both GDP and GTP, with rapid nucleotide exchange. Plays a role in 16S rRNA processing and 30S ribosomal subunit biogenesis and possibly also in cell cycle regulation and energy metabolism. This chain is GTPase Era, found in Staphylococcus aureus (strain Mu3 / ATCC 700698).